We begin with the raw amino-acid sequence, 408 residues long: Protein ZNF365 (408 aa).

The residue at position 16 (Ser16) is a Phosphoserine. The C2H2-type; degenerate zinc finger occupies 26–51 (FRCPRCGDHTRFRSLSSLRAHLEFSH). 2 positions are modified to phosphoserine: Ser139 and Ser146. Residues 170 to 298 (VEAVDRTIEK…QLEYYQSQQA (129 aa)) adopt a coiled-coil conformation. Thr176 carries the phosphothreonine modification. Ser370 carries the post-translational modification Phosphoserine.

Homodimer. Interacts with NDE1 and NDEL1. Interacts with DISC1. Interacts with PARP1. Interacts with MCRS1. In terms of tissue distribution, detected in several tissues, with highest levels in brain. Also expressed during embryonic development. Expressed in cerebral cortex, hippocampus, striatum, inferior colliculus and thalamus.

It is found in the cytoplasm. The protein resides in the cytoskeleton. It localises to the microtubule organizing center. The protein localises to the centrosome. Contributes to genomic stability by preventing telomere dysfunction. Involved in the morphogenesis of basket cells in the somatosensory cortex during embryogenesis. Involved in the positive regulation of oligodendrocyte differentiation during postnatal growth. Involved in dendritic arborization, morphogenesis of spine density dendrite, and establishment of postsynaptic dendrite density in cortical pyramidal neurons. Involved in the regulation of neurogenesis. Negatively regulates neurite outgrowth. Involved in homologous recombination (HR) repair pathway. Required for proper resolution of DNA double-strand breaks (DSBs) by HR. Is required for recovery of stalled replication forks, and directly contributes to genomic stability. Interacts with PARP1 and mediates MRE11-dependent DNA end resection during replication fork recovery. This chain is Protein ZNF365 (Znf365), found in Mus musculus (Mouse).